We begin with the raw amino-acid sequence, 444 residues long: Tubulin beta chain (444 aa).

Positions 11, 69, 138, 142, 143, 144, 204, and 226 each coordinate GTP. Glu69 is a binding site for Mg(2+). The segment at 423 to 444 is disordered; the sequence is QQYQDATAEEEGEFDDEEEMDV. Over residues 429–444 the composition is skewed to acidic residues; it reads TAEEEGEFDDEEEMDV.

It belongs to the tubulin family. Dimer of alpha and beta chains. A typical microtubule is a hollow water-filled tube with an outer diameter of 25 nm and an inner diameter of 15 nM. Alpha-beta heterodimers associate head-to-tail to form protofilaments running lengthwise along the microtubule wall with the beta-tubulin subunit facing the microtubule plus end conferring a structural polarity. Microtubules usually have 13 protofilaments but different protofilament numbers can be found in some organisms and specialized cells. Mg(2+) serves as cofactor.

The protein resides in the cytoplasm. Its subcellular location is the cytoskeleton. Functionally, tubulin is the major constituent of microtubules, a cylinder consisting of laterally associated linear protofilaments composed of alpha- and beta-tubulin heterodimers. Microtubules grow by the addition of GTP-tubulin dimers to the microtubule end, where a stabilizing cap forms. Below the cap, tubulin dimers are in GDP-bound state, owing to GTPase activity of alpha-tubulin. In Euplotes focardii, this protein is Tubulin beta chain.